The sequence spans 347 residues: NADH-ubiquinone oxidoreductase chain 2 (347 aa).

9 helical membrane-spanning segments follow: residues 1-21 (MNPF…MIVM), 59-79 (YFMT…INLL), 93-115 (TASM…HFWV), 149-169 (INPN…GWGG), 178-198 (IMAY…IYNP), 201-221 (TILN…MFAL), 239-259 (IITT…PLTG), 274-294 (DSII…YFYM), and 325-345 (LLPT…MLVV).

The protein belongs to the complex I subunit 2 family. Core subunit of respiratory chain NADH dehydrogenase (Complex I) which is composed of 45 different subunits. Interacts with TMEM242.

It localises to the mitochondrion inner membrane. The enzyme catalyses a ubiquinone + NADH + 5 H(+)(in) = a ubiquinol + NAD(+) + 4 H(+)(out). Its function is as follows. Core subunit of the mitochondrial membrane respiratory chain NADH dehydrogenase (Complex I) which catalyzes electron transfer from NADH through the respiratory chain, using ubiquinone as an electron acceptor. Essential for the catalytic activity and assembly of complex I. The protein is NADH-ubiquinone oxidoreductase chain 2 of Hippopotamus amphibius (Hippopotamus).